Reading from the N-terminus, the 648-residue chain is MAHMVRASSGLSYPERFYAAASYVGLDGSQSSVKQLSSKFSNDTSLLLYTLHQQATLGPCSIPKPSAWNPVEQSKWKSWQGLGTMPSIEAMRLFVKILEEADPGWYPRTSNSVLDPAVHVQINSTKAEPSFESGASFGETKTITSEDGRLTETQDKDVVLEDPDTVSVYNQWTAPRTSGQPPKARYQHGAAVIQDKMYMYGGNHNGRYLGDLHVLDLKNWTWSRVETKVVTGSQETSSPAKLTHCAGHSLIPWDNQLLSIGGHTKDPSESMPVMVFDLHCCSWSILKTYGKPPISRGGQSVTLVGKSLVIFGGQDAKRSLLNDLHILDLDTMTWEEIDAVGSPPTPRSDHAAAVHAERYLLIFGGGSHATCFDDLHVLDLQTMEWSRHTQQGDAPTPRAGHAGVTIGENWYIVGGGDNKSGASKTVVLNMSTLAWSVVTSVQEHVPLASEGLSLVVSSYNGEDIVVAFGGYNGHYNNEVNVLKPSHKSSLKSKIMGASAVPDSFSAVNNATTRDIESEIKVEGKADRIITTLKSEKEEVEASLNKEKIQTLQLKEELAEIDTRNTELYKELQSVRNQLAAEQSRCFKLEVEVAELRQKLQTMETLQKELELLQRQRAVASEQAATMNAKRQSSGGVWGWLAGTPPPKT.

The region spanning 13–107 (YPERFYAAAS…LEEADPGWYP (95 aa)) is the ACB domain. An acyl-CoA contacts are provided by residues Lys34, 49–53 (YTLHQ), and Lys75. 6 Kelch repeats span residues 196 to 244 (KMYM…KLTH), 256 to 306 (QLLS…LVGK), 307 to 357 (SLVI…VHAE), 359 to 408 (YLLI…TIGE), 409 to 457 (NWYI…LVVS), and 464 to 509 (IVVA…AVNN). Ser517 carries the phosphoserine modification. Residues 520–632 (KVEGKADRII…AATMNAKRQS (113 aa)) are a coiled coil. Positions 625–634 (TMNAKRQSSG) are enriched in polar residues. Residues 625-648 (TMNAKRQSSGGVWGWLAGTPPPKT) form a disordered region.

Belongs to the ACBP family. In terms of tissue distribution, expressed in roots, stems, leaves, flowers and siliques.

Its subcellular location is the cytoplasm. In terms of biological role, binds medium- and long-chain acyl-CoA esters with very high affinity. Can interact in vitro with oleoyl-CoA, barely with palmitoyl-CoA, but not with arachidonyl-CoA. May function as an intracellular carrier of acyl-CoA esters. This is Acyl-CoA-binding domain-containing protein 5 (ACBP5) from Arabidopsis thaliana (Mouse-ear cress).